The chain runs to 263 residues: Endonuclease 8 (263 aa).

Catalysis depends on P2, which acts as the Schiff-base intermediate with DNA. E3 acts as the Proton donor in catalysis. The active-site Proton donor; for beta-elimination activity is K53. The DNA site is built by Q70, R125, and N169. An FPG-type zinc finger spans residues 229 to 263; the sequence is KVFHRDGELCERCGGIIEKTTLSSRPFYWCPGCQH. The active-site Proton donor; for delta-elimination activity is R253.

It belongs to the FPG family. It depends on Zn(2+) as a cofactor.

It carries out the reaction 2'-deoxyribonucleotide-(2'-deoxyribose 5'-phosphate)-2'-deoxyribonucleotide-DNA = a 3'-end 2'-deoxyribonucleotide-(2,3-dehydro-2,3-deoxyribose 5'-phosphate)-DNA + a 5'-end 5'-phospho-2'-deoxyribonucleoside-DNA + H(+). Functionally, involved in base excision repair of DNA damaged by oxidation or by mutagenic agents. Acts as a DNA glycosylase that recognizes and removes damaged bases. Has a preference for oxidized pyrimidines, such as thymine glycol, 5,6-dihydrouracil and 5,6-dihydrothymine. Has AP (apurinic/apyrimidinic) lyase activity and introduces nicks in the DNA strand. Cleaves the DNA backbone by beta-delta elimination to generate a single-strand break at the site of the removed base with both 3'- and 5'-phosphates. The chain is Endonuclease 8 from Escherichia coli O7:K1 (strain IAI39 / ExPEC).